The primary structure comprises 474 residues: Cysteine--tRNA ligase (474 aa).

Position 29 (C29) interacts with Zn(2+). A 'HIGH' region motif is present at residues 31-41; it reads ITPYDHVHVGH. Residues C215, H240, and E244 each contribute to the Zn(2+) site. The 'KMSKS' region motif lies at 273-277; that stretch reads KMSKS. K276 provides a ligand contact to ATP.

Belongs to the class-I aminoacyl-tRNA synthetase family. It depends on Zn(2+) as a cofactor.

The protein resides in the cytoplasm. It catalyses the reaction tRNA(Cys) + L-cysteine + ATP = L-cysteinyl-tRNA(Cys) + AMP + diphosphate. The sequence is that of Cysteine--tRNA ligase from Pyrobaculum aerophilum (strain ATCC 51768 / DSM 7523 / JCM 9630 / CIP 104966 / NBRC 100827 / IM2).